We begin with the raw amino-acid sequence, 506 residues long: Cysteine--tRNA ligase (506 aa).

Cysteine 34 serves as a coordination point for Zn(2+). The short motif at 36-46 (PTVYDFAHIGN) is the 'HIGH' region element. Positions 230, 269, and 273 each coordinate Zn(2+). A 'KMSKS' region motif is present at residues 302–306 (KMSKS). Residue lysine 305 coordinates ATP.

It belongs to the class-I aminoacyl-tRNA synthetase family. In terms of assembly, monomer. Zn(2+) serves as cofactor.

The protein resides in the cytoplasm. It carries out the reaction tRNA(Cys) + L-cysteine + ATP = L-cysteinyl-tRNA(Cys) + AMP + diphosphate. The sequence is that of Cysteine--tRNA ligase from Brucella melitensis biotype 2 (strain ATCC 23457).